The sequence spans 374 residues: Isocitrate dehydrogenase [NAD] catalytic subunit 6, mitochondrial (374 aa).

A mitochondrion-targeting transit peptide spans 1 to 44; sequence MTMTAFLARRLIGNGSSQILGTSSSSSGPFISVSRAFFSSSTPI. Substrate contacts are provided by Arg127, Arg137, Arg158, and Asp245. Asp245, Asp269, and Asp273 together coordinate Mg(2+).

The protein belongs to the isocitrate and isopropylmalate dehydrogenases family. In terms of assembly, heterooligomer of catalytic and regulatory subunits. The cofactor is Mg(2+). Requires Mn(2+) as cofactor. In terms of tissue distribution, ubiquitous. Predominantly expressed in leaves.

It localises to the mitochondrion. It catalyses the reaction D-threo-isocitrate + NAD(+) = 2-oxoglutarate + CO2 + NADH. Functionally, catalytic subunit of the NAD(+)-dependent isocitrate dehydrogenase involved in the oxidative decarboxylation of isocitrate to 2-oxoglutarate. Performs an essential role in the oxidative function of the citric acid cycle. This is Isocitrate dehydrogenase [NAD] catalytic subunit 6, mitochondrial (IDH6) from Arabidopsis thaliana (Mouse-ear cress).